The chain runs to 68 residues: DNA-directed RNA polymerase subunit omega (68 aa).

The protein belongs to the RNA polymerase subunit omega family. In terms of assembly, the RNAP catalytic core consists of 2 alpha, 1 beta, 1 beta' and 1 omega subunit. When a sigma factor is associated with the core the holoenzyme is formed, which can initiate transcription.

The catalysed reaction is RNA(n) + a ribonucleoside 5'-triphosphate = RNA(n+1) + diphosphate. Promotes RNA polymerase assembly. Latches the N- and C-terminal regions of the beta' subunit thereby facilitating its interaction with the beta and alpha subunits. In Desulfatibacillum aliphaticivorans, this protein is DNA-directed RNA polymerase subunit omega.